A 981-amino-acid polypeptide reads, in one-letter code: Anoctamin-3 (981 aa).

Residues 1-28 show a composition bias toward polar residues; the sequence is MVHHSGSIQSFKQQKGMNISKSEITTEA. 2 disordered regions span residues 1-32 and 67-87; these read MVHH…SLKP and PTSV…EESR. Topologically, residues 1 to 403 are cytoplasmic; sequence MVHHSGSIQS…LYFAWLGWYT (403 aa). A compositionally biased stretch (basic and acidic residues) spans 76-87; sequence DKPEHVTSEESR. The helical transmembrane segment at 404–424 threads the bilayer; that stretch reads GMLIPAAVVGLCVFFYGLVTM. Asparagine 425, asparagine 448, and asparagine 455 each carry an N-linked (GlcNAc...) asparagine glycan. The Extracellular segment spans residues 425-469; sequence NESQVSQEICKATEVFMCPLCDKNCSLQRLNDSCIYAKVTYLFDN. A helical transmembrane segment spans residues 470 to 490; sequence GGTVFFAIFMAIWATVFLEFW. Over 491 to 550 the chain is Cytoplasmic; the sequence is KRRRSILTYTWDLIEWEEEEETLRPQFEAKYYRMEVINPITGKPEPHQPSSDKVTRLLVS. A helical transmembrane segment spans residues 551 to 571; sequence VSGIFFMISLVITAVFAVVVY. The Extracellular segment spans residues 572–592; it reads RLVVMEQFASFKWNFVKQHWQ. The chain crosses the membrane as a helical span at residues 593–613; it reads FATSGAAVCINFIIIMLLNLA. Residues 614–640 lie on the Cytoplasmic side of the membrane; sequence YEKIAYLLTNLEYPRTESEWENSFALK. The helical transmembrane segment at 641 to 661 threads the bilayer; sequence MFLFQFVNLNSSIFYIAFFLG. The Extracellular segment spans residues 662–761; the sequence is RFVGHPGKYN…MDEYLEMVLQ (100 aa). A helical membrane pass occupies residues 762 to 782; the sequence is FGFTTIFVAAFPLAPLLALLN. Over 783-810 the chain is Cytoplasmic; the sequence is NIIEIRLDAYKFVTQWRRPLPARATDIG. The helical transmembrane segment at 811–831 threads the bilayer; it reads IWLGILEGIGILAVITNAFVI. Over 832–914 the chain is Extracellular; sequence AITSDYIPRF…QYWHILAARL (83 aa). N-linked (GlcNAc...) asparagine glycosylation is present at asparagine 866. A helical membrane pass occupies residues 915–935; it reads AFIIVFEHLVFGIKSFIAYLI. The Cytoplasmic portion of the chain corresponds to 936–981; the sequence is PDIPKGLRERIRREKYLVQEMMYEAELEHLQQQRRKSGQPIHHEWP.

This sequence belongs to the anoctamin family. In terms of assembly, interacts with KCNT1/Slack. As to expression, predominantly expressed in neuronal tissues. Expressed in brain.

The protein localises to the cell membrane. The catalysed reaction is a 1,2-diacyl-sn-glycero-3-phosphocholine(in) = a 1,2-diacyl-sn-glycero-3-phosphocholine(out). It catalyses the reaction a beta-D-galactosyl-(1&lt;-&gt;1')-N-acylsphing-4-enine(out) = a beta-D-galactosyl-(1&lt;-&gt;1')-N-acylsphing-4-enine(in). Functionally, has calcium-dependent phospholipid scramblase activity; scrambles phosphatidylcholine and galactosylceramide. Does not exhibit calcium-activated chloride channel (CaCC) activity. Seems to act as potassium channel regulator and may inhibit pain signaling; can facilitate KCNT1/Slack channel activity by promoting its full single-channel conductance at very low sodium concentrations and by increasing its sodium sensitivity. The chain is Anoctamin-3 from Mus musculus (Mouse).